The following is a 348-amino-acid chain: Protein RecA (348 aa).

65-72 is an ATP binding site; sequence GPESSGKT. Positions 328–348 are disordered; the sequence is SKPQAETSARLATQEELADDY.

It belongs to the RecA family.

Its subcellular location is the cytoplasm. Functionally, can catalyze the hydrolysis of ATP in the presence of single-stranded DNA, the ATP-dependent uptake of single-stranded DNA by duplex DNA, and the ATP-dependent hybridization of homologous single-stranded DNAs. It interacts with LexA causing its activation and leading to its autocatalytic cleavage. This is Protein RecA from Ectopseudomonas oleovorans (Pseudomonas oleovorans).